The chain runs to 337 residues: Ribosomal RNA small subunit methyltransferase H (337 aa).

S-adenosyl-L-methionine contacts are provided by residues 36–38 (GGH), aspartate 56, phenylalanine 82, aspartate 100, and glutamine 107. A disordered region spans residues 314-337 (GLERRSGRIPNPRSPIPASQGDAR).

Belongs to the methyltransferase superfamily. RsmH family.

The protein resides in the cytoplasm. The catalysed reaction is cytidine(1402) in 16S rRNA + S-adenosyl-L-methionine = N(4)-methylcytidine(1402) in 16S rRNA + S-adenosyl-L-homocysteine + H(+). Specifically methylates the N4 position of cytidine in position 1402 (C1402) of 16S rRNA. The chain is Ribosomal RNA small subunit methyltransferase H from Xanthomonas oryzae pv. oryzae (strain PXO99A).